The primary structure comprises 308 residues: Taste receptor type 2 member 107 (308 aa).

Over 1-7 (MLSAAEG) the chain is Extracellular. A helical transmembrane segment spans residues 8 to 28 (ILLCVVTSEAVLGVLGDTFIA). The Cytoplasmic portion of the chain corresponds to 29–43 (LANCMEYAKNKKLSK). A helical transmembrane segment spans residues 44-64 (IGFILIGLAISRIGVVWIIIL). Over 65-94 (QGYMQVFFPHILTFGNITEYITYIWVFLNH) the chain is Extracellular. The N-linked (GlcNAc...) asparagine glycan is linked to Asn80. The helical transmembrane segment at 95–115 (LSVWFATNLNILYFLKIANFS) threads the bilayer. Residues 116–127 (NSVFLWLKSRVR) are Cytoplasmic-facing. A helical transmembrane segment spans residues 128 to 148 (VVFIFLSGCLLTSWLLCFPQF). Topologically, residues 149–180 (SKMLNNSKMYWGNTSWLQQQKNVFLINQSLTN) are extracellular. N-linked (GlcNAc...) asparagine glycans are attached at residues Asn153, Asn161, and Asn175. Residues 181–201 (LGIFFFIIVSLITCFLLIVFL) form a helical membrane-spanning segment. Residues 202 to 232 (WRHIRQMHSDGSGLRDLNTEAHVKAMRVLIS) lie on the Cytoplasmic side of the membrane. Residues 233–253 (FAVLFILHFVGLSIQVLCFFL) traverse the membrane as a helical segment. Topologically, residues 254-258 (PQNNL) are extracellular. A helical transmembrane segment spans residues 259 to 279 (LFITGLIATCLYPCGHSIILI). Over 280-308 (LGNKQLKQASLKALQHLTCCETKRNLSVT) the chain is Cytoplasmic.

It belongs to the G-protein coupled receptor T2R family.

It is found in the membrane. Putative taste receptor which may play a role in the perception of bitterness. The polypeptide is Taste receptor type 2 member 107 (Rattus norvegicus (Rat)).